We begin with the raw amino-acid sequence, 208 residues long: Interleukin-6 (208 aa).

Positions 1–27 are cleaved as a signal peptide; sequence MTFLSTSAFSPLAFSLGLLLVVATAFP. Cysteines 68 and 74 form a disulfide. Residue Ser-77 is modified to Phosphoserine. Residues Cys-97 and Cys-107 are joined by a disulfide bond.

This sequence belongs to the IL-6 superfamily. Component of a hexamer of two molecules each of IL6, IL6R and IL6ST; first binds to IL6R to associate with the signaling subunit IL6ST. Interacts with IL6R (via the N-terminal ectodomain); this interaction may be affected by IL6R-binding with SORL1, hence decreasing IL6 cis signaling. Interacts with SORL1 (via the N-terminal ectodomain); this interaction leads to IL6 internalization and lysosomal degradation. May form a trimeric complex with the soluble SORL1 ectodomain and soluble IL6R receptor; this interaction might stabilize circulating IL6, hence promoting IL6 trans signaling.

The protein localises to the secreted. Cytokine with a wide variety of biological functions in immunity, tissue regeneration, and metabolism. Binds to IL6R, then the complex associates to the signaling subunit IL6ST/gp130 to trigger the intracellular IL6-signaling pathway. The interaction with the membrane-bound IL6R and IL6ST stimulates 'classic signaling', whereas the binding of IL6 and soluble IL6R to IL6ST stimulates 'trans-signaling'. Alternatively, 'cluster signaling' occurs when membrane-bound IL6:IL6R complexes on transmitter cells activate IL6ST receptors on neighboring receiver cells. In terms of biological role, IL6 is a potent inducer of the acute phase response. Rapid production of IL6 contributes to host defense during infection and tissue injury, but excessive IL6 synthesis is involved in disease pathology. In the innate immune response, is synthesized by myeloid cells, such as macrophages and dendritic cells, upon recognition of pathogens through toll-like receptors (TLRs) at the site of infection or tissue injury. In the adaptive immune response, is required for the differentiation of B cells into immunoglobulin-secreting cells. Plays a major role in the differentiation of CD4(+) T cell subsets. Essential factor for the development of T follicular helper (Tfh) cells that are required for the induction of germinal-center formation. Required to drive naive CD4(+) T cells to the Th17 lineage. Also required for proliferation of myeloma cells and the survival of plasmablast cells. Its function is as follows. Acts as an essential factor in bone homeostasis and on vessels directly or indirectly by induction of VEGF, resulting in increased angiogenesis activity and vascular permeability. Induces, through 'trans-signaling' and synergistically with IL1B and TNF, the production of VEGF. Involved in metabolic controls, is discharged into the bloodstream after muscle contraction increasing lipolysis and improving insulin resistance. 'Trans-signaling' in central nervous system also regulates energy and glucose homeostasis. Mediates, through GLP-1, crosstalk between insulin-sensitive tissues, intestinal L cells and pancreatic islets to adapt to changes in insulin demand. Also acts as a myokine. Plays a protective role during liver injury, being required for maintenance of tissue regeneration. Also has a pivotal role in iron metabolism by regulating HAMP/hepcidin expression upon inflammation or bacterial infection. Through activation of IL6ST-YAP-NOTCH pathway, induces inflammation-induced epithelial regeneration. This Felis catus (Cat) protein is Interleukin-6 (IL6).